The following is a 270-amino-acid chain: L-aspartate dehydrogenase (270 aa).

NAD(+) contacts are provided by Ala-123 and Asn-191. His-221 is a catalytic residue.

This sequence belongs to the L-aspartate dehydrogenase family.

It catalyses the reaction L-aspartate + NADP(+) + H2O = oxaloacetate + NH4(+) + NADPH + H(+). The enzyme catalyses L-aspartate + NAD(+) + H2O = oxaloacetate + NH4(+) + NADH + H(+). The protein operates within cofactor biosynthesis; NAD(+) biosynthesis; iminoaspartate from L-aspartate (dehydrogenase route): step 1/1. In terms of biological role, specifically catalyzes the NAD or NADP-dependent dehydrogenation of L-aspartate to iminoaspartate. This Methanocella arvoryzae (strain DSM 22066 / NBRC 105507 / MRE50) protein is L-aspartate dehydrogenase.